Consider the following 305-residue polypeptide: Oxygen-dependent coproporphyrinogen-III oxidase (305 aa).

Position 98 (serine 98) interacts with substrate. A divalent metal cation contacts are provided by histidine 102 and histidine 112. The Proton donor role is filled by histidine 112. Residue 114–116 participates in substrate binding; it reads NVR. Histidine 151 and histidine 181 together coordinate a divalent metal cation. Positions 246–281 are important for dimerization; that stretch reads YVEFNLVYDRGTLFGLQSGGRTESILMSMPPLARWE. Residue 264–266 coordinates substrate; sequence GGR.

Belongs to the aerobic coproporphyrinogen-III oxidase family. As to quaternary structure, homodimer. Requires a divalent metal cation as cofactor.

The protein resides in the cytoplasm. It catalyses the reaction coproporphyrinogen III + O2 + 2 H(+) = protoporphyrinogen IX + 2 CO2 + 2 H2O. It participates in porphyrin-containing compound metabolism; protoporphyrin-IX biosynthesis; protoporphyrinogen-IX from coproporphyrinogen-III (O2 route): step 1/1. In terms of biological role, involved in the heme biosynthesis. Catalyzes the aerobic oxidative decarboxylation of propionate groups of rings A and B of coproporphyrinogen-III to yield the vinyl groups in protoporphyrinogen-IX. This Vibrio vulnificus (strain YJ016) protein is Oxygen-dependent coproporphyrinogen-III oxidase.